The chain runs to 710 residues: Cleavage and polyadenylation factor complex subunit C74.02c (710 aa).

The segment covering 1 to 30 (MDNWNSVRNVSSDRQTSKTSENPPHTSNEY) has biased composition (polar residues). Disordered stretches follow at residues 1–42 (MDNW…LSPD), 85–170 (ASSN…SDVN), and 361–510 (GPAM…SVSW). The segment covering 86–108 (SSNPSLISSGSSQTGSPSQSLSS) has biased composition (low complexity). The segment covering 109–170 (NKEPSSPGIS…EVPSSKSDVN (62 aa)) has biased composition (polar residues). Low complexity-rich tracts occupy residues 361 to 383 (GPAMAPSASNKPSASSTTKSSNS) and 401 to 420 (LASSTKPTSASSSTKAPLTK). Residues 421–430 (QQTNPSTPLS) are compositionally biased toward polar residues. Basic and acidic residues predominate over residues 437–447 (KGREKEKDKDS).

As to quaternary structure, component of the cleavage and polyadenylation factor (CPF) complex.

It localises to the cytoplasm. Its subcellular location is the nucleus. Its function is as follows. RNA-binding component of the cleavage and polyadenylation factor (CPF) complex, which plays a key role in polyadenylation-dependent pre-mRNA 3'-end formation. Involved in poly(A) site recognition. May be involved in coupling transcription termination and mRNA 3'-end formation. The polypeptide is Cleavage and polyadenylation factor complex subunit C74.02c (Schizosaccharomyces pombe (strain 972 / ATCC 24843) (Fission yeast)).